The primary structure comprises 556 residues: Glucose-6-phosphate isomerase (556 aa).

Residue Glu360 is the Proton donor of the active site. Residues His391 and Lys519 contribute to the active site.

It belongs to the GPI family.

It is found in the cytoplasm. The catalysed reaction is alpha-D-glucose 6-phosphate = beta-D-fructose 6-phosphate. It participates in carbohydrate biosynthesis; gluconeogenesis. It functions in the pathway carbohydrate degradation; glycolysis; D-glyceraldehyde 3-phosphate and glycerone phosphate from D-glucose: step 2/4. In terms of biological role, catalyzes the reversible isomerization of glucose-6-phosphate to fructose-6-phosphate. The protein is Glucose-6-phosphate isomerase of Acinetobacter baumannii (strain AB0057).